The chain runs to 558 residues: CTP synthase (558 aa).

The amidoligase domain stretch occupies residues 1 to 266 (MSAKYIFVTG…DRLVMKYLRL (266 aa)). Serine 14 serves as a coordination point for CTP. Serine 14 contributes to the UTP binding site. ATP is bound by residues 15 to 20 (SLGKGL) and aspartate 72. The Mg(2+) site is built by aspartate 72 and glutamate 140. CTP-binding positions include 147–149 (DIE), 187–192 (KTKPTQ), and lysine 223. UTP-binding positions include 187-192 (KTKPTQ) and lysine 223. 239-241 (KDV) provides a ligand contact to ATP. A Glutamine amidotransferase type-1 domain is found at 291–537 (IIGIIGKYVE…IGASYEHRMK (247 aa)). Glycine 355 lines the L-glutamine pocket. The Nucleophile; for glutamine hydrolysis role is filled by cysteine 382. Residues 383 to 386 (LGMQ), glutamate 406, and arginine 463 contribute to the L-glutamine site. Active-site residues include histidine 510 and glutamate 512. Positions 539–558 (THTKEREEESVFLRPERVGK) are disordered. Residues 542–558 (KEREEESVFLRPERVGK) show a composition bias toward basic and acidic residues.

The protein belongs to the CTP synthase family. As to quaternary structure, homotetramer.

The catalysed reaction is UTP + L-glutamine + ATP + H2O = CTP + L-glutamate + ADP + phosphate + 2 H(+). The enzyme catalyses L-glutamine + H2O = L-glutamate + NH4(+). It carries out the reaction UTP + NH4(+) + ATP = CTP + ADP + phosphate + 2 H(+). It functions in the pathway pyrimidine metabolism; CTP biosynthesis via de novo pathway; CTP from UDP: step 2/2. Allosterically activated by GTP, when glutamine is the substrate; GTP has no effect on the reaction when ammonia is the substrate. The allosteric effector GTP functions by stabilizing the protein conformation that binds the tetrahedral intermediate(s) formed during glutamine hydrolysis. Inhibited by the product CTP, via allosteric rather than competitive inhibition. Its function is as follows. Catalyzes the ATP-dependent amination of UTP to CTP with either L-glutamine or ammonia as the source of nitrogen. Regulates intracellular CTP levels through interactions with the four ribonucleotide triphosphates. The sequence is that of CTP synthase from Koribacter versatilis (strain Ellin345).